Reading from the N-terminus, the 467-residue chain is MAVEDNKNSESKNHQEVELHRNDLGLEDSSSPRGVLGMVSDSDNSSSSCSSCSSDDKSSSTSSPFSNTTKTVSSSHHGLQWNKMIESIKKKSMRRFSVIPLLASYELTRKNLRRKQPKLTPSESAFTCEAFFMAKPSWRNFTYEELAVATDYFNPENMIGKGGHAEVYKGVLINGETVAIKKLMSHAKEEEERVSDFLSELGIIAHVNHPNAARLRGFSSDRGLHFVLEYAPYGSLASMLFGSEECLEWKIRYKVALGIADGLSYLHNACPRRIIHRDIKASNILLNHDYEAQISDFGLAKWLPENWPHHVVFPIEGTFGYLAPEYFMHGIVDEKIDVFAFGVLLLEIITSRRAVDTASRQSIVAWAKPFLEKNSMEDIVDPRLGNMFNPTEMQRVMLTASMCVHHIAAMRPDMTRLVQLLRGEDGPAELQQKAGERTMSVNACDLQDHTSSSYLNELRRHRQLLME.

Positions 1-24 are enriched in basic and acidic residues; sequence MAVEDNKNSESKNHQEVELHRNDL. Positions 1–73 are disordered; sequence MAVEDNKNSE…PFSNTTKTVS (73 aa). Low complexity predominate over residues 40–71; that stretch reads SDSDNSSSSCSSCSSDDKSSSTSSPFSNTTKT. Thr142 carries the phosphothreonine modification. The 278-residue stretch at 153 to 430 folds into the Protein kinase domain; the sequence is FNPENMIGKG…LRGEDGPAEL (278 aa). Residues 159 to 167 and Lys181 each bind ATP; that span reads IGKGGHAEV. Residue Asp278 is the Proton acceptor of the active site. Phosphoserine is present on Ser282. Thr318 is modified (phosphothreonine). Tyr326 is modified (phosphotyrosine).

This sequence belongs to the protein kinase superfamily. Ser/Thr protein kinase family. As to quaternary structure, interacts with ARAC5 and ARAC10. Mostly expressed in vasculature, hydathode endothem, leaf mesophyll cells and trichomes.

The protein resides in the cytoplasm. It localises to the endomembrane system. Its subcellular location is the nucleus. It catalyses the reaction L-seryl-[protein] + ATP = O-phospho-L-seryl-[protein] + ADP + H(+). The catalysed reaction is L-threonyl-[protein] + ATP = O-phospho-L-threonyl-[protein] + ADP + H(+). The sequence is that of Receptor-like cytosolic serine/threonine-protein kinase RBK1 (RBK1) from Arabidopsis thaliana (Mouse-ear cress).